A 113-amino-acid polypeptide reads, in one-letter code: Large ribosomal subunit protein P1z (113 aa).

Positions 87-113 (AAAPAKEEKKDEPAEESDGDLGFGLFD) are disordered. A Phosphoserine modification is found at serine 103.

The protein belongs to the eukaryotic ribosomal protein P1/P2 family. In terms of assembly, P1 and P2 exist as dimers at the large ribosomal subunit.

Functionally, plays an important role in the elongation step of protein synthesis. This chain is Large ribosomal subunit protein P1z (RPP1B), found in Arabidopsis thaliana (Mouse-ear cress).